Reading from the N-terminus, the 547-residue chain is Chaperonin GroEL (547 aa).

Residues 30–33, Lys51, 87–91, Gly415, 479–481, and Asp495 each bind ATP; these read TLGP, DGTTT, and NAA. Positions 525–547 are disordered; the sequence is PKEDKPDLGGGNPGGAGGMGGMM. Over residues 532–547 the composition is skewed to gly residues; sequence LGGGNPGGAGGMGGMM.

This sequence belongs to the chaperonin (HSP60) family. In terms of assembly, forms a cylinder of 14 subunits composed of two heptameric rings stacked back-to-back. Interacts with the co-chaperonin GroES.

It is found in the cytoplasm. It catalyses the reaction ATP + H2O + a folded polypeptide = ADP + phosphate + an unfolded polypeptide.. Functionally, together with its co-chaperonin GroES, plays an essential role in assisting protein folding. The GroEL-GroES system forms a nano-cage that allows encapsulation of the non-native substrate proteins and provides a physical environment optimized to promote and accelerate protein folding. The protein is Chaperonin GroEL of Blochmanniella floridana.